We begin with the raw amino-acid sequence, 151 residues long: Deoxyuridine 5'-triphosphate nucleotidohydrolase (151 aa).

Substrate-binding positions include 70-72 (RSG), N83, 87-89 (LID), and M97.

Belongs to the dUTPase family. Mg(2+) is required as a cofactor.

The catalysed reaction is dUTP + H2O = dUMP + diphosphate + H(+). Its pathway is pyrimidine metabolism; dUMP biosynthesis; dUMP from dCTP (dUTP route): step 2/2. This enzyme is involved in nucleotide metabolism: it produces dUMP, the immediate precursor of thymidine nucleotides and it decreases the intracellular concentration of dUTP so that uracil cannot be incorporated into DNA. In Actinobacillus pleuropneumoniae serotype 5b (strain L20), this protein is Deoxyuridine 5'-triphosphate nucleotidohydrolase.